We begin with the raw amino-acid sequence, 409 residues long: Lactadherin (409 aa).

2 EGF-like domains span residues 2–41 and 44–88; these read SGDF…LICN and EKGP…IHCE. 3 disulfides stabilise this stretch: C6–C17, C11–C29, and C31–C40. N41 carries an N-linked (GlcNAc...) asparagine glycan. 6 disulfides stabilise this stretch: C48–C59, C53–C76, C78–C87, C91–C247, C234–C238, and C252–C409. The Cell attachment site signature appears at 67–69; it reads RGD. F5/8 type C domains lie at 91-247 and 252-409; these read CNAP…LLGC and CAEP…LLGC. A glycan (N-linked (GlcNAc...) asparagine) is linked at N372.

In terms of tissue distribution, mammary epithelial cell surfaces and spermatozoan. Also present in testis, epididymis, uterus, adrenal gland, tonsil, muscle, heart, lymphatic gland, thymus and kidney but not spleen, liver, lung or brain.

Its subcellular location is the membrane. It is found in the secreted. It localises to the cytoplasmic vesicle. The protein resides in the secretory vesicle. The protein localises to the acrosome membrane. Contributes to phagocytic removal of apoptotic cells in many tissues. Plays an important role in the maintenance of intestinal epithelial homeostasis and the promotion of mucosal healing. Promotes VEGF-dependent neovascularization. Specific ligand for the alpha-v/beta-3 and alpha-v/beta-5 receptors. Also binds to phosphatidylserine-enriched cell surfaces in a receptor-independent manner. Zona pellucida-binding protein which may play a role in gamete interaction. This Sus scrofa (Pig) protein is Lactadherin (MFGE8).